We begin with the raw amino-acid sequence, 409 residues long: Arginine deiminase (409 aa).

The active-site Amidino-cysteine intermediate is Cys399.

Belongs to the arginine deiminase family.

The protein resides in the cytoplasm. The catalysed reaction is L-arginine + H2O = L-citrulline + NH4(+). The protein operates within amino-acid degradation; L-arginine degradation via ADI pathway; carbamoyl phosphate from L-arginine: step 1/2. The chain is Arginine deiminase from Streptococcus pneumoniae (strain 70585).